The sequence spans 82 residues: Turripeptide IX-23 (82 aa).

An N-terminal signal peptide occupies residues 1–23 (MMAKLMITVMMVLLLSLQQGADG). Residues 24 to 50 (RSERWRKNQMAASSIMRNLITARIDPP) constitute a propeptide that is removed on maturation. 3 disulfide bridges follow: Cys-53–Cys-68, Cys-58–Cys-72, and Cys-64–Cys-79.

Belongs to the Pg turripeptide superfamily. Expressed by the venom duct.

It localises to the secreted. This chain is Turripeptide IX-23, found in Gemmula speciosa (Splendid gem-turris).